The primary structure comprises 307 residues: Mitochondrial brown fat uncoupling protein 1 (307 aa).

The Mitochondrial intermembrane portion of the chain corresponds to 1–10; it reads MVSSTTSEVQ. Residues 11 to 32 traverse the membrane as a helical segment; the sequence is PTMGVKIFSAGVSACLADIITF. Solcar repeat units lie at residues 11 to 102, 111 to 201, and 210 to 295; these read PTMG…VQEY, ASLG…MKGA, and DDVP…LKKE. Over 33–73 the chain is Mitochondrial matrix; that stretch reads PLDTAKVRLQIQGEGQASSTIRYKGVLGTITTLAKTEGLPK. Lys-56 is a fatty acid 16:0 binding site. A helical transmembrane segment spans residues 74–96; that stretch reads LYSGLPAGIQRQISFASLRIGLY. Topologically, residues 97 to 116 are mitochondrial intermembrane; sequence DTVQEYFSSGRETPASLGSK. A helical transmembrane segment spans residues 117–133; the sequence is ISAGLMTGGVAVFIGQP. The Mitochondrial matrix portion of the chain corresponds to 134-178; that stretch reads TEVVKVRMQAQSHLHGIKPRYTGTYNAYRVIATTESLSTLWKGTT. Residues 179 to 195 traverse the membrane as a helical segment; the sequence is PNLMRNVIINCTELVTY. The Mitochondrial intermembrane segment spans residues 196 to 212; it reads DLMKGALVNHHILADDV. The helical transmembrane segment at 213 to 232 threads the bilayer; that stretch reads PCHLLSALVAGFCTTLLASP. Residues 233–266 are Mitochondrial matrix-facing; it reads VDVVKTRFINSLPGQYPSVPSCAMTMYTKEGPAA. The residue at position 254 (Cys-254) is a Cysteine sulfenic acid (-SOH). The helical transmembrane segment at 267–289 threads the bilayer; that stretch reads FFKGFAPSFLRLGSWNVIMFVCF. Lys-269 is a fatty acid 16:0 binding site. Residues 290–307 are Mitochondrial intermembrane-facing; it reads EQLKKELMKSRQTVDCTT.

It belongs to the mitochondrial carrier (TC 2.A.29) family. Most probably functions as a monomer. Binds one purine nucleotide per monomer. However, has also been suggested to function as a homodimer or a homotetramer. Tightly associates with cardiolipin in the mitochondrion inner membrane; may stabilize and regulate its activity. Post-translationally, may undergo ubiquitin-mediated proteasomal degradation. In terms of processing, may undergo sulfenylation upon cold exposure. May increase the sensitivity of UCP1 thermogenic function to the activation by noradrenaline probably through structural effects. Brown adipose tissue.

It is found in the mitochondrion inner membrane. The enzyme catalyses H(+)(in) = H(+)(out). With respect to regulation, has no constitutive proton transporter activity and has to be activated by long-chain fatty acids/LCFAs. Inhibited by purine nucleotides. Both purine nucleotides and LCFAs bind the cytosolic side of the transporter and directly compete to activate or inhibit it. Activated by noradrenaline and reactive oxygen species. Despite lacking canonical translational encoding for selenocysteine, a small pool of the protein has been observed to selectively incorporate selenocysteine at 'Cys-254'. Selenocysteine-modified protein is highly sensitive to redox modification and may constitute a pool of protein highly sensitive to activation by elevated levels of reactive oxygen species (ROS). Functionally, mitochondrial protein responsible for thermogenic respiration, a specialized capacity of brown adipose tissue and beige fat that participates in non-shivering adaptive thermogenesis to temperature and diet variations and more generally to the regulation of energy balance. Functions as a long-chain fatty acid/LCFA and proton symporter, simultaneously transporting one LCFA and one proton through the inner mitochondrial membrane. However, LCFAs remaining associated with the transporter via their hydrophobic tails, it results in an apparent transport of protons activated by LCFAs. Thereby, dissipates the mitochondrial proton gradient and converts the energy of substrate oxydation into heat instead of ATP. Regulates the production of reactive oxygen species/ROS by mitochondria. In Rattus norvegicus (Rat), this protein is Mitochondrial brown fat uncoupling protein 1.